The chain runs to 214 residues: MKLFLDTANIQEIKEAWSLGIIDGVTTNPTHISKENKKFRELIEEICSIVDGPISVEAVSLKAEEIVREAEELSKISPNIVVKIPAIKEGIKAAKILSEKGIKTNITLVFSPSQALLAGKVGATYVSPFVGRLNDISEEGINLVADIKKIYSNYGFKTQIIVSAIRNPMHVVKAALIGADVATMRFDILMSLFRHPMTDLGLEQFLKDWEKVPK.

Lysine 83 serves as the catalytic Schiff-base intermediate with substrate.

This sequence belongs to the transaldolase family. Type 3B subfamily.

It localises to the cytoplasm. It carries out the reaction D-sedoheptulose 7-phosphate + D-glyceraldehyde 3-phosphate = D-erythrose 4-phosphate + beta-D-fructose 6-phosphate. It participates in carbohydrate degradation; pentose phosphate pathway; D-glyceraldehyde 3-phosphate and beta-D-fructose 6-phosphate from D-ribose 5-phosphate and D-xylulose 5-phosphate (non-oxidative stage): step 2/3. In terms of biological role, transaldolase is important for the balance of metabolites in the pentose-phosphate pathway. In Dictyoglomus turgidum (strain DSM 6724 / Z-1310), this protein is Probable transaldolase.